Here is a 287-residue protein sequence, read N- to C-terminus: Putative S-adenosyl-L-methionine-dependent methyltransferase SACE_1742 (287 aa).

Residues aspartate 119 and 148 to 149 contribute to the S-adenosyl-L-methionine site; that span reads DL.

This sequence belongs to the UPF0677 family.

Functionally, exhibits S-adenosyl-L-methionine-dependent methyltransferase activity. The polypeptide is Putative S-adenosyl-L-methionine-dependent methyltransferase SACE_1742 (Saccharopolyspora erythraea (strain ATCC 11635 / DSM 40517 / JCM 4748 / NBRC 13426 / NCIMB 8594 / NRRL 2338)).